A 247-amino-acid chain; its full sequence is Uridylate kinase (247 aa).

16–19 (KLSG) provides a ligand contact to ATP. Gly-58 is a UMP binding site. Residues Gly-59 and Arg-63 each coordinate ATP. UMP-binding positions include Asp-78 and 139 to 146 (TGNPFFTT). ATP contacts are provided by Thr-166, Tyr-172, and Asp-175.

This sequence belongs to the UMP kinase family. As to quaternary structure, homohexamer.

The protein resides in the cytoplasm. It catalyses the reaction UMP + ATP = UDP + ADP. Its pathway is pyrimidine metabolism; CTP biosynthesis via de novo pathway; UDP from UMP (UMPK route): step 1/1. Inhibited by UTP. Functionally, catalyzes the reversible phosphorylation of UMP to UDP. The protein is Uridylate kinase of Xylella fastidiosa (strain 9a5c).